Consider the following 141-residue polypeptide: Hemoglobin subunit alpha (141 aa).

A Globin domain is found at 1–141 (VLSGDDKSNL…VSTVLTSKYR (141 aa)). At Ser-3 the chain carries Phosphoserine. An N6-succinyllysine mark is found at Lys-7 and Lys-11. Lys-16 carries the N6-acetyllysine; alternate modification. Lys-16 bears the N6-succinyllysine; alternate mark. Position 24 is a phosphotyrosine (Tyr-24). An N6-succinyllysine modification is found at Lys-40. Position 49 is a phosphoserine (Ser-49). His-58 contributes to the O2 binding site. His-87 is a binding site for heme b. At Ser-102 the chain carries Phosphoserine. Thr-108 is subject to Phosphothreonine. Phosphoserine is present on residues Ser-124 and Ser-131. A phosphothreonine mark is found at Thr-134 and Thr-137. A Phosphoserine modification is found at Ser-138.

The protein belongs to the globin family. In terms of assembly, heterotetramer of two alpha chains and two beta chains. Red blood cells.

In terms of biological role, involved in oxygen transport from the lung to the various peripheral tissues. This Microtus pennsylvanicus (Meadow vole) protein is Hemoglobin subunit alpha.